A 100-amino-acid chain; its full sequence is Urease subunit gamma (100 aa).

It belongs to the urease gamma subunit family. Heterotrimer of UreA (gamma), UreB (beta) and UreC (alpha) subunits. Three heterotrimers associate to form the active enzyme.

The protein resides in the cytoplasm. The catalysed reaction is urea + 2 H2O + H(+) = hydrogencarbonate + 2 NH4(+). Its pathway is nitrogen metabolism; urea degradation; CO(2) and NH(3) from urea (urease route): step 1/1. This Picosynechococcus sp. (strain ATCC 27264 / PCC 7002 / PR-6) (Agmenellum quadruplicatum) protein is Urease subunit gamma.